Consider the following 140-residue polypeptide: Translation initiation factor 2 subunit beta (140 aa).

It belongs to the eIF-2-beta/eIF-5 family. Heterotrimer composed of an alpha, a beta and a gamma chain.

Its function is as follows. eIF-2 functions in the early steps of protein synthesis by forming a ternary complex with GTP and initiator tRNA. The polypeptide is Translation initiation factor 2 subunit beta (Metallosphaera sedula (strain ATCC 51363 / DSM 5348 / JCM 9185 / NBRC 15509 / TH2)).